A 307-amino-acid chain; its full sequence is Serine/threonine-protein phosphatase 4 catalytic subunit (307 aa).

At Ala2 the chain carries N-acetylalanine. Positions 54, 56, 82, and 114 each coordinate Mn(2+). Catalysis depends on His115, which acts as the Proton donor. Mn(2+) contacts are provided by His164 and His238. Position 307 is a leucine methyl ester (Leu307).

Belongs to the PPP phosphatase family. PP-4 (PP-X) subfamily. As to quaternary structure, serine/threonine-protein phosphatase 4 (PP4) occurs in different assemblies of the catalytic and one or more regulatory subunits. Component of the PP4 complexes PPP4C-PPP4R1, PPP4C-PPP4R2, PPP4C-PPP4R2-PPP4R3A, PPP4C-PPP4R2-PPP4R3B and PPP4C-PPP4R4. The PPP4C-PPP4R2 complex appears to be a tetramer composed of 2 molecules of PPP4C and 2 molecules of PPP4R2. Interacts with REL, NFKB1/p50 and RELA. Interacts with SMN1 and GEMIN4. Interacts with IRS4 (phosphorylated). Interacts with SMEK1/PPP4R3A; the interaction requires PP4R2. Interacts with HDAC3. The cofactor is Mn(2+). In terms of processing, methylation at the C-terminal Leu-307 is critical for interactions with regulatory subunits and functions in DNA repair.

The protein resides in the cytoplasm. It localises to the nucleus. It is found in the cytoskeleton. The protein localises to the microtubule organizing center. Its subcellular location is the centrosome. It carries out the reaction O-phospho-L-seryl-[protein] + H2O = L-seryl-[protein] + phosphate. It catalyses the reaction O-phospho-L-threonyl-[protein] + H2O = L-threonyl-[protein] + phosphate. In terms of biological role, protein phosphatase that is involved in many processes such as microtubule organization at centrosomes, maturation of spliceosomal snRNPs, apoptosis, DNA repair, tumor necrosis factor (TNF)-alpha signaling, activation of c-Jun N-terminal kinase MAPK8, regulation of histone acetylation, DNA damage checkpoint signaling, NF-kappa-B activation and cell migration. The PPP4C-PPP4R1 PP4 complex may play a role in dephosphorylation and regulation of HDAC3. The PPP4C-PPP4R2-PPP4R3A PP4 complex specifically dephosphorylates H2AX phosphorylated on Ser-140 (gamma-H2AX) generated during DNA replication and required for DNA DSB repair. Dephosphorylates NDEL1 at CDK1 phosphorylation sites and negatively regulates CDK1 activity in interphase. In response to DNA damage, catalyzes RPA2 dephosphorylation, an essential step for DNA repair since it allows the efficient RPA2-mediated recruitment of RAD51 to chromatin. This is Serine/threonine-protein phosphatase 4 catalytic subunit (Ppp4c) from Rattus norvegicus (Rat).